We begin with the raw amino-acid sequence, 432 residues long: Gamma-glutamyl phosphate reductase (432 aa).

The protein belongs to the gamma-glutamyl phosphate reductase family.

The protein localises to the cytoplasm. It catalyses the reaction L-glutamate 5-semialdehyde + phosphate + NADP(+) = L-glutamyl 5-phosphate + NADPH + H(+). The protein operates within amino-acid biosynthesis; L-proline biosynthesis; L-glutamate 5-semialdehyde from L-glutamate: step 2/2. Its function is as follows. Catalyzes the NADPH-dependent reduction of L-glutamate 5-phosphate into L-glutamate 5-semialdehyde and phosphate. The product spontaneously undergoes cyclization to form 1-pyrroline-5-carboxylate. This is Gamma-glutamyl phosphate reductase from Psychrobacter sp. (strain PRwf-1).